Reading from the N-terminus, the 472-residue chain is MRSSVLSLHPDRLLPADPGTRAIARRLYAQVATLPIISPHGHTDPAWFATNAPFANATELLLVPDHYVFRMLYSQGIDLDALGIPRADGTRATVDPRAAWRVFAEHYTLLRGTPSALWLNHVFHDVFDLRIRLDAGTADHYYDHITAALQTPAFLPRALFERFNIEVIATTESPLDRLQHHAAIAASGWQGRVVTAYRPDPVVDPEHEQFAGALQQFGALTGEDVLTWDGYLRAHRQRRAFFAAHGATSTDHGHPSAATADLSPAEAQRLFDTVVRGAATPEQAELFRAQVLTEMAAMSLDDGLVMQLHPGCFRNHNRQLFEQYGRDKGADIPMRTDYVHALKPLLDRHGNDPRLRLIVFTLDETSYSRELAPLAGHYPSLLLGPAWWFHDAPEGMWRFREQTLASAGFYNTVGFNDDTRAFLSIPARHDVARRVDSAFLAKLVAEHRLEEDEATEVAIDLAYRLPKQAYKL.

Belongs to the metallo-dependent hydrolases superfamily. Uronate isomerase family.

The catalysed reaction is D-glucuronate = D-fructuronate. The enzyme catalyses aldehydo-D-galacturonate = keto-D-tagaturonate. Its pathway is carbohydrate metabolism; pentose and glucuronate interconversion. The polypeptide is Uronate isomerase (Xanthomonas axonopodis pv. citri (strain 306)).